We begin with the raw amino-acid sequence, 232 residues long: MAKELIGNDWDQILNPIFTSDKYHELHNFLKKEYSTRQIYPDMYHIFTAFKLTPFNKTKVVILGQDPYHNPGQANGMSFSVMPGAQLPPSLRNIYKELYDDVGAIPVNHGYLKKWADQGVLLLNAVLTVPYGHANGHQGKGWEDVTDAAIKALSKRGKVVFILWGRFAQNKIPLIDQSKNFIIKSSHPSPFSADRGFFGSRPFSRCNTALINFGETPIDWQLPEKVSKSDLI.

D66 functions as the Proton acceptor in the catalytic mechanism.

This sequence belongs to the uracil-DNA glycosylase (UDG) superfamily. UNG family.

Its subcellular location is the cytoplasm. It catalyses the reaction Hydrolyzes single-stranded DNA or mismatched double-stranded DNA and polynucleotides, releasing free uracil.. Its function is as follows. Excises uracil residues from the DNA which can arise as a result of misincorporation of dUMP residues by DNA polymerase or due to deamination of cytosine. This chain is Uracil-DNA glycosylase, found in Lactobacillus acidophilus (strain ATCC 700396 / NCK56 / N2 / NCFM).